The primary structure comprises 292 residues: Protein LRATD1 (292 aa).

Residue S38 is modified to Phosphoserine. The region spanning 133 to 228 (PAPEPPAPAP…CRFGKREFKA (96 aa)) is the LRAT domain.

Belongs to the LRATD family. As to expression, only detected in testis. Highly expressed in colon cancer cells.

The protein resides in the cytoplasm. Its function is as follows. May play a role in cell morphology and motility. The chain is Protein LRATD1 from Homo sapiens (Human).